Consider the following 219-residue polypeptide: 3,4-dihydroxy-2-butanone 4-phosphate synthase (219 aa).

D-ribulose 5-phosphate is bound by residues 37–38 (RE), D42, 150–154 (RRGHT), and E174. E38 serves as a coordination point for Mg(2+). H153 lines the Mg(2+) pocket.

This sequence belongs to the DHBP synthase family. In terms of assembly, homodimer. Mg(2+) is required as a cofactor. Mn(2+) serves as cofactor.

The catalysed reaction is D-ribulose 5-phosphate = (2S)-2-hydroxy-3-oxobutyl phosphate + formate + H(+). Its pathway is cofactor biosynthesis; riboflavin biosynthesis; 2-hydroxy-3-oxobutyl phosphate from D-ribulose 5-phosphate: step 1/1. Functionally, catalyzes the conversion of D-ribulose 5-phosphate to formate and 3,4-dihydroxy-2-butanone 4-phosphate. The sequence is that of 3,4-dihydroxy-2-butanone 4-phosphate synthase from Oleidesulfovibrio alaskensis (strain ATCC BAA-1058 / DSM 17464 / G20) (Desulfovibrio alaskensis).